Consider the following 623-residue polypeptide: NAD-dependent malic enzyme, mitochondrial (623 aa).

The N-terminal 31 residues, Met-1–Phe-31, are a transit peptide targeting the mitochondrion. Positions 88 and 122 each coordinate fumarate. The Proton donor role is filled by Ser-143. Residue Arg-196 participates in (S)-malate binding. Arg-196 lines the NAD(+) pocket. Lys-214 serves as the catalytic Proton acceptor. A divalent metal cation contacts are provided by Glu-285 and Asp-286. Residue Asn-289 coordinates NAD(+). Asp-309 serves as a coordination point for a divalent metal cation. Ala-345 serves as a coordination point for NAD(+). (S)-malate is bound by residues Asn-464 and Asn-509.

The protein belongs to the malic enzymes family. As to quaternary structure, heterodimer of two related subunits. The cofactor is Mg(2+). Mn(2+) serves as cofactor.

The protein resides in the mitochondrion matrix. It catalyses the reaction (S)-malate + NAD(+) = pyruvate + CO2 + NADH. It functions in the pathway photosynthesis; C4 acid pathway. This chain is NAD-dependent malic enzyme, mitochondrial, found in Amaranthus hypochondriacus (Prince-of-Wales feather).